A 414-amino-acid polypeptide reads, in one-letter code: Gamma-glutamyl phosphate reductase (414 aa).

Belongs to the gamma-glutamyl phosphate reductase family.

The protein resides in the cytoplasm. It catalyses the reaction L-glutamate 5-semialdehyde + phosphate + NADP(+) = L-glutamyl 5-phosphate + NADPH + H(+). The protein operates within amino-acid biosynthesis; L-proline biosynthesis; L-glutamate 5-semialdehyde from L-glutamate: step 2/2. Its function is as follows. Catalyzes the NADPH-dependent reduction of L-glutamate 5-phosphate into L-glutamate 5-semialdehyde and phosphate. The product spontaneously undergoes cyclization to form 1-pyrroline-5-carboxylate. This chain is Gamma-glutamyl phosphate reductase, found in Thermoanaerobacter sp. (strain X514).